A 388-amino-acid chain; its full sequence is DNA replication and repair protein RecF (388 aa).

30–37 is a binding site for ATP; it reads GANGNGKT.

The protein belongs to the RecF family.

It localises to the cytoplasm. Its function is as follows. The RecF protein is involved in DNA metabolism; it is required for DNA replication and normal SOS inducibility. RecF binds preferentially to single-stranded, linear DNA. It also seems to bind ATP. This Nocardia farcinica (strain IFM 10152) protein is DNA replication and repair protein RecF.